The chain runs to 680 residues: NADPH--cytochrome P450 reductase (680 aa).

At 1–5 the chain is on the lumenal side; sequence MALDK. A helical transmembrane segment spans residues 6–23; that stretch reads LDLYVIITLVVAIAAYFA. Residues 24 to 680 are Cytoplasmic-facing; that stretch reads KNQFLDQQQD…VQNRYQEDVW (657 aa). The region spanning 60–204 is the Flavodoxin-like domain; sequence TLLLFGSQTG…DFLAWKDNVF (145 aa). FMN-binding positions include 66 to 71, 117 to 120, 152 to 161, and Asp-187; these read SQTGTA, ATYG, and LGNSTYEFFN. One can recognise an FAD-binding FR-type domain in the interval 264 to 509; sequence THPFLARIVK…NGPRGKFSKF (246 aa). Arg-283 contributes to the NADP(+) binding site. FAD contacts are provided by residues 439–442, 457–459, and 473–476; these read RYYS, TAV, and GVVT. NADP(+) contacts are provided by residues Thr-537, 599–600, 606–610, and Asp-642; these read SR and KVYVQ. Residue Trp-680 participates in FAD binding.

This sequence belongs to the NADPH--cytochrome P450 reductase family. It in the N-terminal section; belongs to the flavodoxin family. The protein in the C-terminal section; belongs to the flavoprotein pyridine nucleotide cytochrome reductase family. The cofactor is FAD. FMN is required as a cofactor.

It is found in the endoplasmic reticulum membrane. The protein localises to the mitochondrion outer membrane. Its subcellular location is the cell membrane. It carries out the reaction 2 oxidized [cytochrome P450] + NADPH = 2 reduced [cytochrome P450] + NADP(+) + H(+). Functionally, this enzyme is required for electron transfer from NADP to cytochrome P450 in microsomes. It can also provide electron transfer to heme oxygenase and cytochrome B5. Involved in ergosterol biosynthesis. The polypeptide is NADPH--cytochrome P450 reductase (Candida tropicalis (Yeast)).